The sequence spans 329 residues: Biotin synthase (329 aa).

The 225-residue stretch at 38–262 (NTIQVSTLLS…IMPHSYIRLS (225 aa)) folds into the Radical SAM core domain. Residues cysteine 53, cysteine 57, and cysteine 60 each contribute to the [4Fe-4S] cluster site. 4 residues coordinate [2Fe-2S] cluster: cysteine 97, cysteine 128, cysteine 188, and arginine 260.

Belongs to the radical SAM superfamily. Biotin synthase family. Homodimer. The cofactor is [4Fe-4S] cluster. It depends on [2Fe-2S] cluster as a cofactor.

It carries out the reaction (4R,5S)-dethiobiotin + (sulfur carrier)-SH + 2 reduced [2Fe-2S]-[ferredoxin] + 2 S-adenosyl-L-methionine = (sulfur carrier)-H + biotin + 2 5'-deoxyadenosine + 2 L-methionine + 2 oxidized [2Fe-2S]-[ferredoxin]. The protein operates within cofactor biosynthesis; biotin biosynthesis; biotin from 7,8-diaminononanoate: step 2/2. In terms of biological role, catalyzes the conversion of dethiobiotin (DTB) to biotin by the insertion of a sulfur atom into dethiobiotin via a radical-based mechanism. This chain is Biotin synthase, found in Acinetobacter calcoaceticus.